The primary structure comprises 428 residues: Cyclic AMP-responsive element-binding protein 3-like protein 4 (428 aa).

The required for transcriptional activation stretch occupies residues 1-68; the sequence is MLLGSLFEQT…EFLQMMINPN (68 aa). Residues 1 to 294 lie on the Cytoplasmic side of the membrane; the sequence is MLLGSLFEQT…QTSNKAAQTS (294 aa). Residues 71 to 111 form a disordered region; that stretch reads YSTGPAAAESPESDSGFSDDPRPDTPPQSETSPPLPQPTPV. The 64-residue stretch at 216–279 folds into the bZIP domain; it reads ILKKVRRKIR…ISLITQLRKL (64 aa). The segment at 218 to 247 is basic motif; the sequence is KKVRRKIRNKQSAQDSRRRKKEYIDGLESR. Residues 258–279 form a leucine-zipper region; the sequence is LHKKVVELEKHNISLITQLRKL. Residues 295-315 traverse the membrane as a helical; Signal-anchor for type II membrane protein segment; sequence TCVLILLFSLALLVFPSYSPF. Residues 316–428 are Lumenal-facing; that stretch reads RSRPSASQED…LSKTARADEM (113 aa). The tract at residues 339–428 is disordered; the sequence is NKGGFSEVAD…LSKTARADEM (90 aa). Over residues 354–368 the composition is skewed to basic and acidic residues; sequence TLHRAQQREEGDPGR. Residue N418 is glycosylated (N-linked (GlcNAc...) asparagine).

Belongs to the bZIP family. ATF subfamily. As to quaternary structure, binds DNA as a dimer. In terms of processing, controlled by regulated intramembrane proteolysis (RIP). A fragment containing the cytoplasmic transcription factor domain is released by proteolysis. The cleavage seems to be performed sequentially by site-1 and site-2 proteases (PS1 and PS2).

It localises to the endoplasmic reticulum membrane. The protein resides in the nucleus. Functionally, transcriptional activator. This chain is Cyclic AMP-responsive element-binding protein 3-like protein 4 (creb3l4), found in Xenopus tropicalis (Western clawed frog).